The chain runs to 176 residues: NAD(P)H-quinone oxidoreductase subunit 6, chloroplastic (176 aa).

A run of 5 helical transmembrane segments spans residues Phe10–Pro30, Pro32–Leu52, Ala61–Met81, Leu92–Ile112, and Phe152–Thr172.

The protein belongs to the complex I subunit 6 family. NDH is composed of at least 16 different subunits, 5 of which are encoded in the nucleus.

The protein localises to the plastid. It localises to the chloroplast thylakoid membrane. The enzyme catalyses a plastoquinone + NADH + (n+1) H(+)(in) = a plastoquinol + NAD(+) + n H(+)(out). It carries out the reaction a plastoquinone + NADPH + (n+1) H(+)(in) = a plastoquinol + NADP(+) + n H(+)(out). NDH shuttles electrons from NAD(P)H:plastoquinone, via FMN and iron-sulfur (Fe-S) centers, to quinones in the photosynthetic chain and possibly in a chloroplast respiratory chain. The immediate electron acceptor for the enzyme in this species is believed to be plastoquinone. Couples the redox reaction to proton translocation, and thus conserves the redox energy in a proton gradient. The sequence is that of NAD(P)H-quinone oxidoreductase subunit 6, chloroplastic (ndhG) from Daucus carota (Wild carrot).